Reading from the N-terminus, the 674-residue chain is Slender lobes-like protein (674 aa).

3 disordered regions span residues 65 to 137 (LEKS…NASK), 168 to 321 (NELN…TIKK), and 352 to 382 (QKSR…RVEV). Over residues 73–97 (PKKKVQTKKHLPPVRKKDSVKRRRI) the composition is skewed to basic residues. A compositionally biased stretch (polar residues) spans 127–137 (NQSNCSSNASK). Positions 216 to 228 (VDSDDEEEQDQDQ) are enriched in acidic residues. Residues 233 to 245 (KPAESENHSEIKK) show a composition bias toward basic and acidic residues. Ser-248 is modified (phosphoserine). Positions 272-312 (EDPKEAGKNEESDKDKPAENGKSDKDKQAETEMSDEDKPSE) are enriched in basic and acidic residues. A phosphoserine mark is found at Ser-358 and Ser-391. Disordered stretches follow at residues 395–585 (MVAE…AGYV) and 618–659 (KYFR…NSAK). The segment covering 400 to 410 (KRQKNKRKRLS) has biased composition (basic residues). Ser-414 carries the post-translational modification Phosphoserine. A compositionally biased stretch (basic residues) spans 548 to 558 (AKQKKKGKKKQ).

The chain is Slender lobes-like protein from Drosophila melanogaster (Fruit fly).